Here is a 151-residue protein sequence, read N- to C-terminus: Deoxyuridine 5'-triphosphate nucleotidohydrolase (151 aa).

Substrate-binding positions include 70–72 (RSG), Asn-83, 87–89 (LID), and Met-97.

The protein belongs to the dUTPase family. Mg(2+) serves as cofactor.

It catalyses the reaction dUTP + H2O = dUMP + diphosphate + H(+). The protein operates within pyrimidine metabolism; dUMP biosynthesis; dUMP from dCTP (dUTP route): step 2/2. Functionally, this enzyme is involved in nucleotide metabolism: it produces dUMP, the immediate precursor of thymidine nucleotides and it decreases the intracellular concentration of dUTP so that uracil cannot be incorporated into DNA. The polypeptide is Deoxyuridine 5'-triphosphate nucleotidohydrolase (Psychromonas ingrahamii (strain DSM 17664 / CCUG 51855 / 37)).